We begin with the raw amino-acid sequence, 410 residues long: Serine hydroxymethyltransferase (410 aa).

Residues Leu-116 and 120–122 (GHL) each bind (6S)-5,6,7,8-tetrahydrofolate. Lys-225 carries the N6-(pyridoxal phosphate)lysine modification.

The protein belongs to the SHMT family. As to quaternary structure, homodimer. Requires pyridoxal 5'-phosphate as cofactor.

The protein resides in the cytoplasm. It carries out the reaction (6R)-5,10-methylene-5,6,7,8-tetrahydrofolate + glycine + H2O = (6S)-5,6,7,8-tetrahydrofolate + L-serine. It participates in one-carbon metabolism; tetrahydrofolate interconversion. The protein operates within amino-acid biosynthesis; glycine biosynthesis; glycine from L-serine: step 1/1. Functionally, catalyzes the reversible interconversion of serine and glycine with tetrahydrofolate (THF) serving as the one-carbon carrier. This reaction serves as the major source of one-carbon groups required for the biosynthesis of purines, thymidylate, methionine, and other important biomolecules. Also exhibits THF-independent aldolase activity toward beta-hydroxyamino acids, producing glycine and aldehydes, via a retro-aldol mechanism. The sequence is that of Serine hydroxymethyltransferase from Lacticaseibacillus casei (strain BL23) (Lactobacillus casei).